The primary structure comprises 119 residues: Nucleoid-associated protein Cphy_0047 (119 aa).

Residues 23–45 (AQRMQKQMEDKTKEMEEKQWEAT) are disordered. Basic and acidic residues predominate over residues 28–42 (KQMEDKTKEMEEKQW).

The protein belongs to the YbaB/EbfC family. As to quaternary structure, homodimer.

The protein localises to the cytoplasm. It localises to the nucleoid. Functionally, binds to DNA and alters its conformation. May be involved in regulation of gene expression, nucleoid organization and DNA protection. This chain is Nucleoid-associated protein Cphy_0047, found in Lachnoclostridium phytofermentans (strain ATCC 700394 / DSM 18823 / ISDg) (Clostridium phytofermentans).